Reading from the N-terminus, the 205-residue chain is Syndecan 4-B (205 aa).

An N-terminal signal peptide occupies residues 1–17 (MNRLLLLLALVLSGVAA). At 18–162 (ESIRETETMD…FFQRTEVIVA (145 aa)) the chain is on the extracellular side. A disordered region spans residues 26-113 (MDPTSMLEYE…HDFDETKTGR (88 aa)). 3 O-linked (Xyl...) (glycosaminoglycan) serine glycosylation sites follow: Ser37, Ser73, and Ser75. Over residues 44–94 (VFVDEDDDDDYEDGVDYEIDSESDNDEDYSGSGDDDFDDEDNVEDEDEEET) the composition is skewed to acidic residues. Over residues 102 to 113 (PEHDFDETKTGR) the composition is skewed to basic and acidic residues. Residues 163–183 (IIAGTLVGLVVAVSFIVFLVI) form a helical membrane-spanning segment. The Cytoplasmic portion of the chain corresponds to 184 to 205 (RRNQNGDLVKKPIYKKTSTMEV).

It belongs to the syndecan proteoglycan family. Interacts with the Wnt receptor fzd7 and its signal transducer dvl2/dsh. O-glycosylated; contains both chondroitin sulfate and heparan sulfate. Ser-37, Ser-73 and Ser-75 can all be modified by either chondroitin sulfate or heparan sulfate, and the protein exists in forms that contain only chondroitin sulfate, only heparan sulfate and both chondroitin sulfate and heparan sulfate. As to expression, expressed in the animal hemisphere from the 4-cell to the blastula stage. During gastrulation, expressed in the involuting dorsal mesoderm and ectoderm. After involution, localized mainly to the anterior neuroectoderm. At later stages, expressed in the brain, branchial arches, pronephros, tailbud, and at low levels in the somites.

It localises to the membrane. In terms of biological role, cell surface proteoglycan. Regulates non-canonical Wnt signaling, being necessary and sufficient for fibronectrin-mediated translocation of dvl2/dsh to the plasma membrane. Required for proper convergent extension movements during gastrulation, which shape the neural plate, and for subsequent neural tube closure. This Xenopus laevis (African clawed frog) protein is Syndecan 4-B (sdc4-b).